The following is a 293-amino-acid chain: Lymphocyte antigen 6 complex locus protein G6f (293 aa).

A signal peptide spans 1–19 (MAMVVFLLLYLCGHPQAAA). One can recognise an Ig-like V-type domain in the interval 20 to 124 (DNIQTLYVPS…HKYQNWRVYD (105 aa)). At 20–237 (DNIQTLYVPS…APLPSWDVSW (218 aa)) the chain is on the extracellular side. A disulfide bridge links cysteine 37 with cysteine 108. Asparagine 90 carries an N-linked (GlcNAc...) asparagine glycan. A helical transmembrane segment spans residues 238-258 (ILMLLFAAGQGVTIIALSIVI). Topologically, residues 259–293 (WRHQRAQGTQDREPSIPHFKPEVQVYENIHLARLR) are cytoplasmic. The residue at position 284 (tyrosine 284) is a Phosphotyrosine.

In terms of assembly, homodimer; disulfide-linked. Interacts with GRB2 and GRB7 in a phosphorylation-dependent manner. N-glycosylated.

The protein localises to the cell membrane. May play a role in the downstream signal transduction pathways involving GRB2 and GRB7. This Rattus norvegicus (Rat) protein is Lymphocyte antigen 6 complex locus protein G6f (Ly6g6f).